A 304-amino-acid chain; its full sequence is MNTSELSIAEEIDYEALPSHAPLHSQLLAGAFAGIMEHSLMFPIDALKTRVQAAGLNKAASTGMISQISKISTMEGSMALWKGVQSVILGAGPAHAVYFGTYEFCKARLISPEDMQTHQPMKTALSGTIATIAADALMNPFDTVKQRLQLDTNLRVWNVTKQIYQNEGFAAFYYSYPTTLAMNIPFAAFNFMIYESASKFFNPQNSYNPLIHCLCGGISGATCAALTTPLDCIKTVLQVRGSETVSIEIMKDANTFGRASRAILEVHGWKGFWRGLKPRIVANIPATAISWTAYECAKHFLMKN.

Solcar repeat units follow at residues alanine 21 to arginine 108, histidine 118 to phenylalanine 200, and tyrosine 207 to phenylalanine 300. 6 consecutive transmembrane segments (helical) span residues leucine 23–methionine 41, glycine 83–tyrosine 102, proline 120–asparagine 139, serine 175–tyrosine 194, proline 209–threonine 228, and glycine 275–alanine 288.

This sequence belongs to the mitochondrial carrier (TC 2.A.29) family.

Its subcellular location is the mitochondrion inner membrane. Its function is as follows. MRS4 suppresses a mitochondrial splice defect in the first intron of the COB gene. It may act as a carrier, exerting its suppressor activity via modulation of solute concentrations in the mitochondrion (possibly of cations). Not essential. This Saccharomyces cerevisiae (strain ATCC 204508 / S288c) (Baker's yeast) protein is Mitochondrial RNA-splicing protein MRS4 (MRS4).